A 395-amino-acid chain; its full sequence is Probable L-tyrosine/L-aspartate decarboxylase (395 aa).

N6-(pyridoxal phosphate)lysine is present on Lys-242.

Belongs to the group II decarboxylase family. MfnA subfamily. Requires pyridoxal 5'-phosphate as cofactor.

It catalyses the reaction L-tyrosine + H(+) = tyramine + CO2. It carries out the reaction L-aspartate + H(+) = beta-alanine + CO2. The protein operates within cofactor biosynthesis; methanofuran biosynthesis. It functions in the pathway cofactor biosynthesis; coenzyme A biosynthesis. In terms of biological role, catalyzes the decarboxylation of L-tyrosine to produce tyramine for methanofuran biosynthesis. Can also catalyze the decarboxylation of L-aspartate to produce beta-alanine for coenzyme A (CoA) biosynthesis. This is Probable L-tyrosine/L-aspartate decarboxylase from Methanosarcina acetivorans (strain ATCC 35395 / DSM 2834 / JCM 12185 / C2A).